The chain runs to 384 residues: MTTKLIPAQQYHDIFVAGKPLIDLRAPIEFDRGAFPSSVNLPLMVDKEREKVGTCYKEQGQQAAIALGHSLVHGVVKQQRIDAWLNFLSAHPQAYLYCFRGGLRSQLTQQWLQEAGVTVPYVQGGYKGMRQYLIGVIEAAPSLQPLLSLSGMTGSGKTDFLKRRKEAIDLEGIANHRGSSFGKNIDPQPTQINFENRLAIALLHHQLGNHACLLLEDESFLIGRSALPQSFYSAMQTADIVVLEEDDDIRLTRLLDEYVHKMHRGFIERLGLEAGFEAFSHYLLQSLGSIRKRLGGKQYQELQDIMQQALSQQLNQNQTSQHLAWISLLLHKYYDPMYEYQLQKKAGNILFRGSHQATHEWLDNYQRDNYHRNNDPLNSQHSKG.

A Rhodanese domain is found at 15 to 138; that stretch reads FVAGKPLIDL…MRQYLIGVIE (124 aa). The S-selanylcysteine intermediate role is filled by Cys98.

The protein belongs to the SelU family. As to quaternary structure, monomer.

The enzyme catalyses 5-methylaminomethyl-2-thiouridine(34) in tRNA + selenophosphate + (2E)-geranyl diphosphate + H2O + H(+) = 5-methylaminomethyl-2-selenouridine(34) in tRNA + (2E)-thiogeraniol + phosphate + diphosphate. It catalyses the reaction 5-methylaminomethyl-2-thiouridine(34) in tRNA + (2E)-geranyl diphosphate = 5-methylaminomethyl-S-(2E)-geranyl-thiouridine(34) in tRNA + diphosphate. The catalysed reaction is 5-methylaminomethyl-S-(2E)-geranyl-thiouridine(34) in tRNA + selenophosphate + H(+) = 5-methylaminomethyl-2-(Se-phospho)selenouridine(34) in tRNA + (2E)-thiogeraniol. It carries out the reaction 5-methylaminomethyl-2-(Se-phospho)selenouridine(34) in tRNA + H2O = 5-methylaminomethyl-2-selenouridine(34) in tRNA + phosphate. Its function is as follows. Involved in the post-transcriptional modification of the uridine at the wobble position (U34) of tRNA(Lys), tRNA(Glu) and tRNA(Gln). Catalyzes the conversion of 2-thiouridine (S2U-RNA) to 2-selenouridine (Se2U-RNA). Acts in a two-step process involving geranylation of 2-thiouridine (S2U) to S-geranyl-2-thiouridine (geS2U) and subsequent selenation of the latter derivative to 2-selenouridine (Se2U) in the tRNA chain. The polypeptide is tRNA 2-selenouridine synthase (Shewanella sp. (strain MR-4)).